We begin with the raw amino-acid sequence, 489 residues long: MSAAEPALAPLSPGAPVLVAGGGITGRAVLAALRRFGAAPTLCDDDPATLRGYVDSGVDTVSTSAAAERISRYALVVTSPGFAPTAPLPLAAAAAGVPVWGDVELAWRLDVAGHYGPPRRWLVVTGTNGKTTTTSMLHAMLTAAGRRSLLCGNIGSPVLDVLDQPAELLAVELSSFQLHWAPSLRPEGGAVLNIAEDHLDWHGTLADYAAAKARVLDGRVAVVGLDDSRAAALLSTARAPVRVGFRLGEPAAGELGVRGGQLVDRAFADDLTLLPVDSIPVPGPVGVLDALAAAALARCVDVPASPIAEAIVSFRVGRHRAEVVAVADGITYVDDSKATNPHAAEASVLAYPRVVWIAGGLLKGASVDAEVARMASWLVGAVLIGRDRREVAEALSRHAPDVPVVHVVTGEDAGMDATPVVFGANVTKVKHLGGDLGAAVMSAAVAAARDLAKPGDTVLLAPAGASFDQFAGYADRGEAFAAAVRAAIR.

126–132 (GTNGKTT) contacts ATP.

This sequence belongs to the MurCDEF family.

Its subcellular location is the cytoplasm. It carries out the reaction UDP-N-acetyl-alpha-D-muramoyl-L-alanine + D-glutamate + ATP = UDP-N-acetyl-alpha-D-muramoyl-L-alanyl-D-glutamate + ADP + phosphate + H(+). Its pathway is cell wall biogenesis; peptidoglycan biosynthesis. Cell wall formation. Catalyzes the addition of glutamate to the nucleotide precursor UDP-N-acetylmuramoyl-L-alanine (UMA). In Mycolicibacterium paratuberculosis (strain ATCC BAA-968 / K-10) (Mycobacterium paratuberculosis), this protein is UDP-N-acetylmuramoylalanine--D-glutamate ligase.